Reading from the N-terminus, the 342-residue chain is Farnesyl pyrophosphate synthase 2 (342 aa).

3 residues coordinate isopentenyl diphosphate: K48, R51, and Q86. The Mg(2+) site is built by D93 and D97. R102 provides a ligand contact to dimethylallyl diphosphate. R103 provides a ligand contact to isopentenyl diphosphate. 5 residues coordinate dimethylallyl diphosphate: K190, T191, Q229, K246, and K255.

The protein belongs to the FPP/GGPP synthase family. Mg(2+) serves as cofactor.

It is found in the cytoplasm. It catalyses the reaction isopentenyl diphosphate + dimethylallyl diphosphate = (2E)-geranyl diphosphate + diphosphate. The enzyme catalyses isopentenyl diphosphate + (2E)-geranyl diphosphate = (2E,6E)-farnesyl diphosphate + diphosphate. It functions in the pathway isoprenoid biosynthesis; farnesyl diphosphate biosynthesis; farnesyl diphosphate from geranyl diphosphate and isopentenyl diphosphate: step 1/1. The protein operates within isoprenoid biosynthesis; geranyl diphosphate biosynthesis; geranyl diphosphate from dimethylallyl diphosphate and isopentenyl diphosphate: step 1/1. Its function is as follows. Catalyzes the sequential condensation of isopentenyl pyrophosphate with the allylic pyrophosphates, dimethylallyl pyrophosphate, and then with the resultant geranylpyrophosphate to the ultimate product farnesyl pyrophosphate. The polypeptide is Farnesyl pyrophosphate synthase 2 (FPS2) (Parthenium argentatum (Guayule rubber plant)).